The primary structure comprises 456 residues: Bifunctional protein GlmU (456 aa).

Residues 1–228 (MPQNTLNTVI…SHLAAGVNNK (228 aa)) form a pyrophosphorylase region. UDP-N-acetyl-alpha-D-glucosamine contacts are provided by residues 11–14 (LAAG), Lys25, Gln75, 80–81 (GT), 102–104 (YGD), Gly138, Glu153, Asn168, and Asn226. Asp104 is a Mg(2+) binding site. Asn226 provides a ligand contact to Mg(2+). Residues 229-249 (RQLAELERIFQTEQAQELLKA) are linker. An N-acetyltransferase region spans residues 250–456 (GVTLRDPARF…GWVRPEKNKQ (207 aa)). UDP-N-acetyl-alpha-D-glucosamine is bound by residues Arg332 and Lys350. The Proton acceptor role is filled by His362. 2 residues coordinate UDP-N-acetyl-alpha-D-glucosamine: Tyr365 and Asn376. Residues Ala379, 385–386 (NY), Ser404, Ala422, and Arg439 contribute to the acetyl-CoA site.

This sequence in the N-terminal section; belongs to the N-acetylglucosamine-1-phosphate uridyltransferase family. In the C-terminal section; belongs to the transferase hexapeptide repeat family. As to quaternary structure, homotrimer. Mg(2+) serves as cofactor.

It is found in the cytoplasm. The catalysed reaction is alpha-D-glucosamine 1-phosphate + acetyl-CoA = N-acetyl-alpha-D-glucosamine 1-phosphate + CoA + H(+). It catalyses the reaction N-acetyl-alpha-D-glucosamine 1-phosphate + UTP + H(+) = UDP-N-acetyl-alpha-D-glucosamine + diphosphate. Its pathway is nucleotide-sugar biosynthesis; UDP-N-acetyl-alpha-D-glucosamine biosynthesis; N-acetyl-alpha-D-glucosamine 1-phosphate from alpha-D-glucosamine 6-phosphate (route II): step 2/2. The protein operates within nucleotide-sugar biosynthesis; UDP-N-acetyl-alpha-D-glucosamine biosynthesis; UDP-N-acetyl-alpha-D-glucosamine from N-acetyl-alpha-D-glucosamine 1-phosphate: step 1/1. It participates in bacterial outer membrane biogenesis; LPS lipid A biosynthesis. Functionally, catalyzes the last two sequential reactions in the de novo biosynthetic pathway for UDP-N-acetylglucosamine (UDP-GlcNAc). The C-terminal domain catalyzes the transfer of acetyl group from acetyl coenzyme A to glucosamine-1-phosphate (GlcN-1-P) to produce N-acetylglucosamine-1-phosphate (GlcNAc-1-P), which is converted into UDP-GlcNAc by the transfer of uridine 5-monophosphate (from uridine 5-triphosphate), a reaction catalyzed by the N-terminal domain. In Neisseria gonorrhoeae, this protein is Bifunctional protein GlmU.